Reading from the N-terminus, the 32-residue chain is Cytochrome b6-f complex subunit 8 (32 aa).

The chain crosses the membrane as a helical span at residues 6 to 26; that stretch reads IVGITWAALMVVFTFSLSLVV.

The protein belongs to the PetN family. The 4 large subunits of the cytochrome b6-f complex are cytochrome b6, subunit IV (17 kDa polypeptide, PetD), cytochrome f and the Rieske protein, while the 4 small subunits are PetG, PetL, PetM and PetN. The complex functions as a dimer.

It localises to the plastid. The protein localises to the chloroplast thylakoid membrane. Its function is as follows. Component of the cytochrome b6-f complex, which mediates electron transfer between photosystem II (PSII) and photosystem I (PSI), cyclic electron flow around PSI, and state transitions. This chain is Cytochrome b6-f complex subunit 8, found in Pinus koraiensis (Korean pine).